The following is a 256-amino-acid chain: Hydroxyacylglutathione hydrolase (256 aa).

Positions 55, 57, 59, 60, 113, 130, and 168 each coordinate Zn(2+).

It belongs to the metallo-beta-lactamase superfamily. Glyoxalase II family. Monomer. It depends on Zn(2+) as a cofactor.

It catalyses the reaction an S-(2-hydroxyacyl)glutathione + H2O = a 2-hydroxy carboxylate + glutathione + H(+). The protein operates within secondary metabolite metabolism; methylglyoxal degradation; (R)-lactate from methylglyoxal: step 2/2. Functionally, thiolesterase that catalyzes the hydrolysis of S-D-lactoyl-glutathione to form glutathione and D-lactic acid. The chain is Hydroxyacylglutathione hydrolase from Psychromonas ingrahamii (strain DSM 17664 / CCUG 51855 / 37).